The following is a 204-amino-acid chain: ATP-dependent Clp protease proteolytic subunit 1 (204 aa).

Catalysis depends on Ser-97, which acts as the Nucleophile. His-122 is a catalytic residue.

It belongs to the peptidase S14 family. As to quaternary structure, fourteen ClpP subunits assemble into 2 heptameric rings which stack back to back to give a disk-like structure with a central cavity, resembling the structure of eukaryotic proteasomes.

Its subcellular location is the cytoplasm. It carries out the reaction Hydrolysis of proteins to small peptides in the presence of ATP and magnesium. alpha-casein is the usual test substrate. In the absence of ATP, only oligopeptides shorter than five residues are hydrolyzed (such as succinyl-Leu-Tyr-|-NHMec, and Leu-Tyr-Leu-|-Tyr-Trp, in which cleavage of the -Tyr-|-Leu- and -Tyr-|-Trp bonds also occurs).. Cleaves peptides in various proteins in a process that requires ATP hydrolysis. Has a chymotrypsin-like activity. Plays a major role in the degradation of misfolded proteins. The chain is ATP-dependent Clp protease proteolytic subunit 1 from Nostoc sp. (strain PCC 7120 / SAG 25.82 / UTEX 2576).